We begin with the raw amino-acid sequence, 397 residues long: MERQKKKDMDFLTEDLWEIILARLPLKSIITTPKLVCKVWKSIIESRCFRDLFQSLHQNSHHSSWSLMCRGCETEIMSHYGSDNWNLNHSLGYYISSFLTDKFENYNEARVVSYTDVGLILVHRVSSQSFYVANPVSRQCVEILPSQKLDCFWILGIATRVENGVVLGYKVVLLKPNFTFLIYSSETGLWSLNSDTFPFSYISQEFNNPISLNGSLYWLAHGSEYQDFIVSIDFYVVDSRSDRCRATPFPDLDKVPKFRRTCTTSQGCLMYMNIFSIPKVDGNLEDKLCVWRLESWQWRLVFEISLDSIKTGFDYIPLGTDPFDAKTVYLWSRKCLLSINLHNGDIVLHKDVEHSSAGRILNSVDCPRDMTYILESNFASFVLPQWMHPFPSTVRSV.

One can recognise an F-box domain in the interval 6–56 (KKDMDFLTEDLWEIILARLPLKSIITTPKLVCKVWKSIIESRCFRDLFQSL).

The protein is F-box protein At3g28330 of Arabidopsis thaliana (Mouse-ear cress).